The sequence spans 602 residues: Probable translation initiation factor IF-2 (602 aa).

Positions 15-230 (LRTPIVAVLG…VLMGLSQRYL (216 aa)) constitute a tr-type G domain. Residues 24-31 (GHVDHGKT) are G1. 24-31 (GHVDHGKT) lines the GTP pocket. A G2 region spans residues 49 to 53 (AITQH). Residues 86 to 89 (DTPG) form a G3 region. GTP contacts are provided by residues 86–90 (DTPGH) and 140–143 (NKID). Positions 140 to 143 (NKID) are G4. Residues 208–210 (SAE) form a G5 region.

This sequence belongs to the TRAFAC class translation factor GTPase superfamily. Classic translation factor GTPase family. IF-2 subfamily.

In terms of biological role, function in general translation initiation by promoting the binding of the formylmethionine-tRNA to ribosomes. Seems to function along with eIF-2. This Natronomonas pharaonis (strain ATCC 35678 / DSM 2160 / CIP 103997 / JCM 8858 / NBRC 14720 / NCIMB 2260 / Gabara) (Halobacterium pharaonis) protein is Probable translation initiation factor IF-2.